The following is a 716-amino-acid chain: Beta-galactosidase (716 aa).

The Proton donor role is filled by E389. The active-site Nucleophile is the E462.

Belongs to the glycosyl hydrolase 2 family. In terms of assembly, homodimer.

The catalysed reaction is Hydrolysis of terminal non-reducing beta-D-galactose residues in beta-D-galactosides.. In terms of biological role, displays beta-galactosidase activity with the artificial chromogenic substrate o-nitrophenyl-beta-D-galactopyranoside (ONPG). The protein is Beta-galactosidase of Thermoanaerobacterium thermosulfurigenes (Clostridium thermosulfurogenes).